The primary structure comprises 257 residues: uncharacterized protein (257 aa).

Residues 1 to 22 (MIHSKRLRLWLYLVLLAVFIGA) form the signal peptide. C23 carries the N-palmitoyl cysteine lipid modification. C23 carries the S-diacylglycerol cysteine lipid modification.

It belongs to the staphylococcal tandem lipoprotein family.

It is found in the cell membrane. This is an uncharacterized protein from Staphylococcus aureus (strain NCTC 8325 / PS 47).